The primary structure comprises 279 residues: MATH domain and coiled-coil domain-containing protein At1g31390 (279 aa).

One can recognise an MATH domain in the interval Glu6 to Val134. Residues Lys235 to Asp271 are a coiled coil.

The protein is MATH domain and coiled-coil domain-containing protein At1g31390 of Arabidopsis thaliana (Mouse-ear cress).